The primary structure comprises 215 residues: Myelin protein zero-like protein 2 (215 aa).

Residues 1 to 26 form the signal peptide; that stretch reads MYGKSPTRAVLFLLGLQLTALWPTAA. Residues 27 to 141 form the Ig-like V-type domain; the sequence is VEIYTPRVLE…DGLIGEIQLS (115 aa). Residues 27 to 154 lie on the Extracellular side of the membrane; the sequence is VEIYTPRVLE…TVRFSEIHFL (128 aa). N-linked (GlcNAc...) asparagine glycosylation is found at Asn39 and Asn118. Cys47 and Cys123 are joined by a disulfide. Residues 155–175 form a helical membrane-spanning segment; the sequence is ALAIGSACALMVIIVIVVVLF. Residues 176–215 lie on the Cytoplasmic side of the membrane; the sequence is QHFRKKRRAERAHRVVEIKSKEEEKLNQEKKASVSLEYTD.

It belongs to the myelin P0 protein family.

Its subcellular location is the membrane. In terms of biological role, mediates homophilic cell-cell adhesion. The chain is Myelin protein zero-like protein 2 (MPZL2) from Bos taurus (Bovine).